The following is a 436-amino-acid chain: Aminopeptidase C (436 aa).

Residues C68, H356, and N378 contribute to the active site.

This sequence belongs to the peptidase C1 family. As to quaternary structure, homohexamer.

The enzyme catalyses Inactivates bleomycin B2 (a cytotoxic glycometallopeptide) by hydrolysis of a carboxyamide bond of beta-aminoalanine, but also shows general aminopeptidase activity. The specificity varies somewhat with source, but amino acid arylamides of Met, Leu and Ala are preferred.. Functionally, hydrolyzes naphthylamide-substituted amino acids as well as di- and tripeptides in which the half-cystine residue is involved in a disulfide loop, notably in oxytocin and vasopressin. Also has a bleomycin hydrolase activity. The polypeptide is Aminopeptidase C (pepC) (Lactococcus lactis subsp. cremoris (Streptococcus cremoris)).